The primary structure comprises 574 residues: Phosphate permease PHO89 (574 aa).

The Extracellular segment spans residues 1-5; it reads MALHQ. A helical transmembrane segment spans residues 6-26; it reads FDYIFAIAMLFAFLDAFNIGA. Topologically, residues 27–43 are cytoplasmic; that stretch reads NDVANSFASSISSRSLK. The helical transmembrane segment at 44 to 64 threads the bilayer; that stretch reads YWQAMVLAGLCEFLGAVLAGA. Topologically, residues 65-84 are extracellular; the sequence is RVSGTIKNNIIDSSIFTNDP. A helical membrane pass occupies residues 85 to 105; it reads AVLMLTMTSALIGSSCWLTFA. The Cytoplasmic portion of the chain corresponds to 106 to 117; it reads TAIGMPVSTTHS. A helical membrane pass occupies residues 118 to 138; it reads IVGGTIGAGIAAGGANGVVWG. Over 139–145 the chain is Extracellular; sequence WSGVSQI. Residues 146 to 166 traverse the membrane as a helical segment; that stretch reads IASWFIAPILAGAIAAIVFSI. At 167–184 the chain is on the cytoplasmic side; the sequence is SRFSVLEVKSLERSIKNA. A helical transmembrane segment spans residues 185–205; sequence LLLVGVLVFATFSILTMLIVW. Over 206–222 the chain is Extracellular; sequence KGSPNLHLDDLSETETA. A helical transmembrane segment spans residues 223-243; sequence VSIVLTGAIASIVYFIFFYPF. Residues 244-354 lie on the Cytoplasmic side of the membrane; it reads YRRKVLDQDW…SLLKQGPKKW (111 aa). The segment at 301–332 is disordered; sequence EDEENKAASNSNDSVKNKEDIQEVDLVRTETE. Residues 315 to 332 are compositionally biased toward basic and acidic residues; sequence VKNKEDIQEVDLVRTETE. Residues 355–375 traverse the membrane as a helical segment; sequence PLLFWLVISHGWTQDVIHAQV. Topologically, residues 376–398 are extracellular; the sequence is NDRDMLSGDLKGMYERSKFYDNR. A helical transmembrane segment spans residues 399-419; the sequence is VEYIYSVLQAITAATMSFAHG. Over 420-447 the chain is Cytoplasmic; it reads ANDVANATGPLSAVYVIWKTNTIGAKSE. A helical transmembrane segment spans residues 448-468; that stretch reads VPVWVLAYGGVALVIGCWTYG. The Extracellular portion of the chain corresponds to 469–503; that stretch reads YNIIKNLGNKMILQSPSRGFSIELAVAITTVMATQ. The helical transmembrane segment at 504 to 524 threads the bilayer; the sequence is LGIPTSTTQIAVGGIVAVGLC. At 525–541 the chain is on the cytoplasmic side; sequence NKDLKSVNWRMVAWCYS. Residues 542 to 562 form a helical membrane-spanning segment; sequence GWFLTLPIAGLIAGIINGIIL. Over 563–574 the chain is Extracellular; it reads NAPRFGVEYQMT.

The protein belongs to the inorganic phosphate transporter (PiT) (TC 2.A.20) family. In terms of assembly, forms homodimers and higher order homooligomers.

It is found in the cell membrane. The catalysed reaction is 2 Na(+)(out) + phosphate(out) = 2 Na(+)(in) + phosphate(in). With respect to regulation, weakly stimulated by Li(+) and K(+). Inhibited by monensin. Inhibited by phosphonoacetic acid. Inhibited by methylphosphonate. Inhibited by dimethylphosphonate. In terms of biological role, sodium-phosphate symporter. Active in early growth phase. In Saccharomyces cerevisiae (strain ATCC 204508 / S288c) (Baker's yeast), this protein is Phosphate permease PHO89 (PHO89).